We begin with the raw amino-acid sequence, 215 residues long: Orotate phosphoribosyltransferase (215 aa).

A 5-phospho-alpha-D-ribose 1-diphosphate-binding site is contributed by Lys-26. Residue 34 to 35 (FF) participates in orotate binding. 5-phospho-alpha-D-ribose 1-diphosphate-binding positions include 72-73 (YK), Arg-99, Lys-100, Lys-103, His-105, and 124-132 (DDVITAGTA). Residues Thr-128 and Arg-156 each contribute to the orotate site.

This sequence belongs to the purine/pyrimidine phosphoribosyltransferase family. PyrE subfamily. As to quaternary structure, homodimer. The cofactor is Mg(2+).

It carries out the reaction orotidine 5'-phosphate + diphosphate = orotate + 5-phospho-alpha-D-ribose 1-diphosphate. Its pathway is pyrimidine metabolism; UMP biosynthesis via de novo pathway; UMP from orotate: step 1/2. In terms of biological role, catalyzes the transfer of a ribosyl phosphate group from 5-phosphoribose 1-diphosphate to orotate, leading to the formation of orotidine monophosphate (OMP). This chain is Orotate phosphoribosyltransferase, found in Shewanella oneidensis (strain ATCC 700550 / JCM 31522 / CIP 106686 / LMG 19005 / NCIMB 14063 / MR-1).